A 141-amino-acid chain; its full sequence is Arsenate reductase (141 aa).

Catalysis depends on cysteine 12, which acts as the Nucleophile; cysteine thioarsenate intermediate.

It belongs to the ArsC family. As to quaternary structure, monomer in solution.

The enzyme catalyses [glutaredoxin]-dithiol + arsenate + glutathione + H(+) = glutathionyl-S-S-[glutaredoxin] + arsenite + H2O. Its activity is regulated as follows. Inhibited by the thiol reagents iodoacetate (IAA) and N-ethylmaleimide (NEM). Activity is rapidly inactivated by the histidine-modifying reagent diethylpyrocarbonate (DEPC). Functionally, involved in resistance to arsenate. Catalyzes the reduction of arsenate [As(V)] to arsenite [As(III)]. The resulting arsenite is then extruded from the cell via the ArsAB transport system. The polypeptide is Arsenate reductase (Escherichia coli).